A 561-amino-acid chain; its full sequence is Putative transport protein YbjL (561 aa).

The next 5 helical transmembrane spans lie at 8–28 (LLNG…LCLG), 32–52 (LGSI…LLGQ), 66–86 (FMLF…SIFF), 94–114 (MLAL…GKLF), and 158–178 (NLSL…IVGA). 2 RCK C-terminal domains span residues 200 to 288 (RGLD…SFRN) and 292 to 373 (VFDR…RIGF). 5 consecutive transmembrane segments (helical) span residues 383–403 (LLAF…TFQF), 406–426 (FSFG…LGFM), 451–471 (VFMA…LGAI), 475–495 (MLIA…LFGA), and 540–560 (AIAN…WPGL).

It belongs to the AAE transporter (TC 2.A.81) family. YbjL subfamily.

It localises to the cell membrane. This Escherichia coli O127:H6 (strain E2348/69 / EPEC) protein is Putative transport protein YbjL.